The primary structure comprises 256 residues: Cytochrome c-type biogenesis protein CcmE homolog, mitochondrial (256 aa).

The transit peptide at 1-57 (MAARLLFRRSSQILRSIQRNPQISSSFESPPCPIFHSLTTASPDPSRLSSLTFLRSL) directs the protein to the mitochondrion. A helical membrane pass occupies residues 84 to 106 (LWTYALTFSCIAGFVVIVLNQFQ). Heme-binding residues include histidine 222 and tyrosine 226.

This sequence belongs to the CcmE/CycJ family.

It is found in the mitochondrion inner membrane. The protein localises to the mitochondrion intermembrane space. In terms of biological role, heme-binding chaperone that may be involved in cytochrome c maturation in mitochondria. This Arabidopsis thaliana (Mouse-ear cress) protein is Cytochrome c-type biogenesis protein CcmE homolog, mitochondrial.